A 718-amino-acid polypeptide reads, in one-letter code: Myeloperoxidase (718 aa).

The signal sequence occupies residues 1–15 (MKLLLALAGLLAPLA). Residues 16–138 (MLQTSNGATP…SSGCAYQDVR (123 aa)) constitute a propeptide that is removed on maturation. Asn-113 carries N-linked (GlcNAc...) asparagine glycosylation. The cysteines at positions 141 and 154 are disulfide-linked. Asp-234 is a heme b binding site. Residue His-235 is the Proton acceptor of the active site. Residue Asp-236 participates in Ca(2+) binding. 2 disulfide bridges follow: Cys-255/Cys-265 and Cys-259/Cys-283. At Cys-290 the chain carries Cysteine sulfenic acid (-SOH). The N-linked (GlcNAc...) asparagine glycan is linked to Asn-297. Residues Thr-308, Phe-310, Asp-312, and Ser-314 each contribute to the Ca(2+) site. N-linked (GlcNAc...) asparagine glycosylation is found at Asn-329 and Asn-365. Cysteines 361 and 372 form a disulfide. Heme b contacts are provided by Glu-382 and Met-383. The N-linked (GlcNAc...) asparagine glycan is linked to Asn-457. Residue His-476 participates in heme b binding. 2 disulfide bridges follow: Cys-580-Cys-637 and Cys-678-Cys-704. An N-linked (GlcNAc...) asparagine glycan is attached at Asn-711.

It belongs to the peroxidase family. XPO subfamily. In terms of assembly, homodimer; disulfide-linked. Each monomer consists of a light and a heavy chain. Found in a complex with CP and LTF; interacts directly with CP, which protects CP antioxidant properties by MPO. Ca(2+) is required as a cofactor. The cofactor is heme b.

It localises to the lysosome. The catalysed reaction is chloride + H2O2 + H(+) = hypochlorous acid + H2O. Its function is as follows. Part of the host defense system of polymorphonuclear leukocytes. It is responsible for microbicidal activity against a wide range of organisms. In the stimulated PMN, MPO catalyzes the production of hypohalous acids, primarily hypochlorous acid in physiologic situations, and other toxic intermediates that greatly enhance PMN microbicidal activity. Mediates the proteolytic cleavage of alpha-1-microglobulin to form t-alpha-1-microglobulin, which potently inhibits oxidation of low density lipoprotein particles and limits vascular damage. This is Myeloperoxidase (Mpo) from Mus musculus (Mouse).